The following is a 160-amino-acid chain: Ureidoglycolate lyase (160 aa).

This sequence belongs to the ureidoglycolate lyase family. Homodimer. Requires Ni(2+) as cofactor.

The enzyme catalyses (S)-ureidoglycolate = urea + glyoxylate. Its pathway is nitrogen metabolism; (S)-allantoin degradation. Catalyzes the catabolism of the allantoin degradation intermediate (S)-ureidoglycolate, generating urea and glyoxylate. Involved in the utilization of allantoin as nitrogen source. The sequence is that of Ureidoglycolate lyase from Salmonella typhimurium (strain LT2 / SGSC1412 / ATCC 700720).